Here is a 369-residue protein sequence, read N- to C-terminus: Phospho-N-acetylmuramoyl-pentapeptide-transferase (369 aa).

Transmembrane regions (helical) follow at residues I2 to F22, G54 to L74, G80 to L100, F113 to V133, A158 to I178, L195 to F215, P241 to W261, I268 to L288, L293 to I313, and F347 to L367.

It belongs to the glycosyltransferase 4 family. MraY subfamily. Requires Mg(2+) as cofactor.

The protein localises to the cell membrane. The enzyme catalyses UDP-N-acetyl-alpha-D-muramoyl-L-alanyl-gamma-D-glutamyl-meso-2,6-diaminopimeloyl-D-alanyl-D-alanine + di-trans,octa-cis-undecaprenyl phosphate = di-trans,octa-cis-undecaprenyl diphospho-N-acetyl-alpha-D-muramoyl-L-alanyl-D-glutamyl-meso-2,6-diaminopimeloyl-D-alanyl-D-alanine + UMP. It functions in the pathway cell wall biogenesis; peptidoglycan biosynthesis. In terms of biological role, catalyzes the initial step of the lipid cycle reactions in the biosynthesis of the cell wall peptidoglycan: transfers peptidoglycan precursor phospho-MurNAc-pentapeptide from UDP-MurNAc-pentapeptide onto the lipid carrier undecaprenyl phosphate, yielding undecaprenyl-pyrophosphoryl-MurNAc-pentapeptide, known as lipid I. The polypeptide is Phospho-N-acetylmuramoyl-pentapeptide-transferase (Tropheryma whipplei (strain Twist) (Whipple's bacillus)).